We begin with the raw amino-acid sequence, 739 residues long: Poly(A) polymerase alpha (739 aa).

The span at 1 to 17 (MPFPVTTQGSQQTQPPQ) shows a compositional bias: low complexity. The segment at 1 to 22 (MPFPVTTQGSQQTQPPQRHYGI) is disordered. A phosphoserine mark is found at Ser-10 and Ser-24. ATP is bound by residues 100–102 (FGS), Thr-109, 113–115 (DID), Asp-167, Lys-228, Tyr-237, and 246–247 (GV). Residues Asp-113, Asp-115, and Asp-167 each coordinate Mg(2+). Residues Lys-444, Lys-445, Lys-506, and Lys-507 each participate in a glycyl lysine isopeptide (Lys-Gly) (interchain with G-Cter in SUMO) cross-link. Residues 490 to 507 (RKQLHQLLPSHVLQKRKK) carry the Nuclear localization signal 1 motif. A ser/Thr-rich region spans residues 508–643 (HSTEGVKLTA…TKVPNPIVGV (136 aa)). A compositionally biased stretch (low complexity) spans 523–534 (LDLSMDSDNSMS). The tract at residues 523-725 (LDLSMDSDNS…SDIPALPANP (203 aa)) is disordered. Residues 535 to 557 (VPSPTSAMKTSPLNSSGSSQGRN) show a composition bias toward polar residues. Position 537 is a phosphoserine; by MAPK (Ser-537). Ser-558 bears the Phosphoserine mark. A compositionally biased stretch (polar residues) spans 566-582 (ASVTSIQASEVSVPQAN). Composition is skewed to low complexity over residues 583 to 594 (SSESPGGPSSES) and 611 to 622 (TVSRVVSSTRLV). N6-acetyllysine is present on residues Lys-635 and Lys-644. The short motif at 644 to 659 (KRTSSPNKEESPKKTK) is the Nuclear localization signal 2 element. Composition is skewed to basic and acidic residues over residues 650 to 660 (NKEESPKKTKT) and 676 to 686 (GHDKTETKEQV). Residues 671-739 (CLALSGHDKT…KNSIKLRLNR (69 aa)) form a required for interaction with NUDT21 region. The span at 691-715 (SAVQSETVPASASLLASQKTSSTDL) shows a compositional bias: polar residues. Position 730 is an N6-acetyllysine; alternate (Lys-730). A Glycyl lysine isopeptide (Lys-Gly) (interchain with G-Cter in SUMO); alternate cross-link involves residue Lys-730. Ser-732 carries the phosphoserine modification. Position 734 is an N6-acetyllysine; alternate (Lys-734). A Glycyl lysine isopeptide (Lys-Gly) (interchain with G-Cter in SUMO); alternate cross-link involves residue Lys-734.

Belongs to the poly(A) polymerase family. Monomer. Found in a complex with CPSF1, FIP1L1 and PAPOLA. Interacts with AHCYL1 and FIP1L1; the interaction with AHCYL1 seems to increase interaction with FIP1L1. Interacts with NUDT21; the interaction is diminished by acetylation. Interacts with KPNB1; the interaction promotes PAP nuclear import and is inhibited by acetylation of PAP. The cofactor is Mg(2+). Requires Mn(2+) as cofactor. Polysumoylated. Varying sumoylation depending on tissue- and cell-type. Highly sumoylated in bladder and NIH 3T3 cells. Sumoylation is required for nuclear localization and enhances PAP stability. Desumoylated by SENP1. Inhibits polymerase activity. In terms of processing, hyperphosphorylation on multiple CDK2 consensus and non-consensus sites in the C-terminal Ser/Thr-rich region represses PAP activity in late M-phase. Phosphorylation/dephosphorylation may regulate the interaction between PAP and CPSF. Post-translationally, acetylated in the C-terminus. Acetylation decreases interaction with NUDT21 and KPNB1, and inhibits nuclear localization through inhibiting binding to the importin alpha/beta complex. Expressed in brain, thymus, lung, kidney, bladder, testis and spleen.

Its subcellular location is the nucleus. It catalyses the reaction RNA(n) + ATP = RNA(n)-3'-adenine ribonucleotide + diphosphate. Functionally, polymerase that creates the 3'-poly(A) tail of mRNA's. Also required for the endoribonucleolytic cleavage reaction at some polyadenylation sites. May acquire specificity through interaction with a cleavage and polyadenylation specificity factor (CPSF) at its C-terminus. The protein is Poly(A) polymerase alpha (Papola) of Mus musculus (Mouse).